The primary structure comprises 602 residues: MFS-type efflux transporter pyiT (602 aa).

The disordered stretch occupies residues 1-33 (MEKAKDSLPTTGDPVPSQGTINPVDETGGSASD). The next 7 helical transmembrane spans lie at 43 to 63 (FWFT…EGSV), 123 to 143 (WLTI…GGAT), 156 to 176 (GLGS…LLPL), 185 to 205 (IIFM…GILV), 212 to 232 (WVFY…FFFL), 251 to 271 (FFGN…LTYG), and 282 to 302 (IIVS…FEAS). Asn-317 is a glycosylation site (N-linked (GlcNAc...) asparagine). The next 6 membrane-spanning stretches (helical) occupy residues 325-345 (IATF…PLYF), 357-377 (GVML…GGAL), 386-406 (NIHF…TILN), 410-430 (SLAV…VPTA), 451-471 (TFAF…AAIF), and 524-544 (LERV…VIFL). The span at 564-585 (IPQTAADNSASRPNTINDTASQ) shows a compositional bias: polar residues. The segment at 564-602 (IPQTAADNSASRPNTINDTASQAPILKQRRSTNQERETV) is disordered. Asn-580 carries N-linked (GlcNAc...) asparagine glycosylation.

It belongs to the major facilitator superfamily.

It is found in the cell membrane. Functionally, MFS-type efflux transporter; part of the gene cluster that mediates the biosynthesis of the mycotoxin pyrichalasin H, a tyrosine-derived cytochalasan that inhibits the growth of rice seedlings, but also inhibits lymphocyte capping and actin polymerization and alters cell morphology. Pyrichalasin H is indicated as the responsible agent for the genus-specific pathogenicity of M.grisea toward crabgrass. PyiT might be involved in the excretion of pyrichalasin H. The sequence is that of MFS-type efflux transporter pyiT from Pyricularia grisea (Crabgrass-specific blast fungus).